We begin with the raw amino-acid sequence, 206 residues long: Urease accessory protein UreG (206 aa).

Position 14–21 (14–21 (GPVGSGKT)) interacts with GTP.

This sequence belongs to the SIMIBI class G3E GTPase family. UreG subfamily. As to quaternary structure, homodimer. UreD, UreF and UreG form a complex that acts as a GTP-hydrolysis-dependent molecular chaperone, activating the urease apoprotein by helping to assemble the nickel containing metallocenter of UreC. The UreE protein probably delivers the nickel.

The protein localises to the cytoplasm. Its function is as follows. Facilitates the functional incorporation of the urease nickel metallocenter. This process requires GTP hydrolysis, probably effectuated by UreG. In Aliivibrio fischeri (strain ATCC 700601 / ES114) (Vibrio fischeri), this protein is Urease accessory protein UreG.